Here is a 186-residue protein sequence, read N- to C-terminus: Casparian strip membrane protein 1 (186 aa).

Residues 1 to 26 (MKSSPAELISEAKSSTQNSKMKRAVS) are Cytoplasmic-facing. The helical transmembrane segment at 27–47 (VLDFILRLIAVVATLASAIAM) threads the bilayer. Topologically, residues 48–74 (GTTDESLPFFTQFIRFRAEYDDLPTLR) are extracellular. Residues 75-95 (LFVVASAFASGYLILSLPLSI) traverse the membrane as a helical segment. The Cytoplasmic segment spans residues 96-107 (LHITRSSARRTR). The chain crosses the membrane as a helical span at residues 108–128 (VILIILDMVMLTSLTAASSAA). At 129 to 161 (AAIVYLAHKGNAKANWFAFCQQYDSFCERISGS) the chain is on the extracellular side. A helical transmembrane segment spans residues 162-182 (LIGSFIAIPLFIMLILFSALV). Residues 183 to 186 (LSKR) are Cytoplasmic-facing.

This sequence belongs to the Casparian strip membrane proteins (CASP) family. Homodimer and heterodimers.

It localises to the cell membrane. Its function is as follows. Regulates membrane-cell wall junctions and localized cell wall deposition. Required for establishment of the Casparian strip membrane domain (CSD) and the subsequent formation of Casparian strips, a cell wall modification of the root endodermis that determines an apoplastic barrier between the intraorganismal apoplasm and the extraorganismal apoplasm and prevents lateral diffusion. The sequence is that of Casparian strip membrane protein 1 from Lotus japonicus (Lotus corniculatus var. japonicus).